The sequence spans 606 residues: Putative auxin response factor 21 (606 aa).

Positions 126-228 form a DNA-binding region, TF-B3; the sequence is FTKVLTASDT…ELRVGIRRAR (103 aa). The region spanning 511–592 is the PB1 domain; it reads RTCTKVQMQG…MVKKILIYSK (82 aa).

It belongs to the ARF family. As to quaternary structure, homodimers and heterodimers.

Its subcellular location is the nucleus. In terms of biological role, auxin response factors (ARFs) are transcriptional factors that bind specifically to the DNA sequence 5'-TGTCTC-3' found in the auxin-responsive promoter elements (AuxREs). Could act as transcriptional activator or repressor. Formation of heterodimers with Aux/IAA proteins may alter their ability to modulate early auxin response genes expression. This chain is Putative auxin response factor 21 (ARF21), found in Arabidopsis thaliana (Mouse-ear cress).